A 400-amino-acid chain; its full sequence is CCA-adding enzyme (400 aa).

2 residues coordinate ATP: Gly28 and Arg31. CTP is bound by residues Gly28 and Arg31. Residues Asp41 and Asp43 each contribute to the Mg(2+) site. Residues Arg112, Asp155, Arg158, Arg161, and Arg164 each coordinate ATP. 5 residues coordinate CTP: Arg112, Asp155, Arg158, Arg161, and Arg164.

This sequence belongs to the tRNA nucleotidyltransferase/poly(A) polymerase family. Bacterial CCA-adding enzyme type 3 subfamily. As to quaternary structure, homodimer. Mg(2+) serves as cofactor.

It carries out the reaction a tRNA precursor + 2 CTP + ATP = a tRNA with a 3' CCA end + 3 diphosphate. It catalyses the reaction a tRNA with a 3' CCA end + 2 CTP + ATP = a tRNA with a 3' CCACCA end + 3 diphosphate. Its function is as follows. Catalyzes the addition and repair of the essential 3'-terminal CCA sequence in tRNAs without using a nucleic acid template. Adds these three nucleotides in the order of C, C, and A to the tRNA nucleotide-73, using CTP and ATP as substrates and producing inorganic pyrophosphate. tRNA 3'-terminal CCA addition is required both for tRNA processing and repair. Also involved in tRNA surveillance by mediating tandem CCA addition to generate a CCACCA at the 3' terminus of unstable tRNAs. While stable tRNAs receive only 3'-terminal CCA, unstable tRNAs are marked with CCACCA and rapidly degraded. This chain is CCA-adding enzyme, found in Staphylococcus haemolyticus (strain JCSC1435).